The chain runs to 176 residues: ATP synthase subunit b 2 (176 aa).

The chain crosses the membrane as a helical span at residues 29–49 (IFWLVITLVIIYMVLSKVALP).

The protein belongs to the ATPase B chain family. As to quaternary structure, F-type ATPases have 2 components, F(1) - the catalytic core - and F(0) - the membrane proton channel. F(1) has five subunits: alpha(3), beta(3), gamma(1), delta(1), epsilon(1). F(0) has three main subunits: a(1), b(2) and c(10-14). The alpha and beta chains form an alternating ring which encloses part of the gamma chain. F(1) is attached to F(0) by a central stalk formed by the gamma and epsilon chains, while a peripheral stalk is formed by the delta and b chains.

It is found in the cell inner membrane. F(1)F(0) ATP synthase produces ATP from ADP in the presence of a proton or sodium gradient. F-type ATPases consist of two structural domains, F(1) containing the extramembraneous catalytic core and F(0) containing the membrane proton channel, linked together by a central stalk and a peripheral stalk. During catalysis, ATP synthesis in the catalytic domain of F(1) is coupled via a rotary mechanism of the central stalk subunits to proton translocation. Functionally, component of the F(0) channel, it forms part of the peripheral stalk, linking F(1) to F(0). The b'-subunit is a diverged and duplicated form of b found in plants and photosynthetic bacteria. In Roseobacter denitrificans (strain ATCC 33942 / OCh 114) (Erythrobacter sp. (strain OCh 114)), this protein is ATP synthase subunit b 2 (atpF2).